The following is a 375-amino-acid chain: N5-carboxyaminoimidazole ribonucleotide synthase (375 aa).

Residues R108, K148, 153–159 (GYDGKGQ), 183–186 (EQYL), E191, H214, and 268–269 (NE) each bind ATP. The ATP-grasp domain occupies 112–298 (KQTLQDSGSN…QFDTHIKAIT (187 aa)).

Belongs to the PurK/PurT family. In terms of assembly, homodimer.

The enzyme catalyses 5-amino-1-(5-phospho-beta-D-ribosyl)imidazole + hydrogencarbonate + ATP = 5-carboxyamino-1-(5-phospho-D-ribosyl)imidazole + ADP + phosphate + 2 H(+). It functions in the pathway purine metabolism; IMP biosynthesis via de novo pathway; 5-amino-1-(5-phospho-D-ribosyl)imidazole-4-carboxylate from 5-amino-1-(5-phospho-D-ribosyl)imidazole (N5-CAIR route): step 1/2. Catalyzes the ATP-dependent conversion of 5-aminoimidazole ribonucleotide (AIR) and HCO(3)(-) to N5-carboxyaminoimidazole ribonucleotide (N5-CAIR). This Staphylococcus saprophyticus subsp. saprophyticus (strain ATCC 15305 / DSM 20229 / NCIMB 8711 / NCTC 7292 / S-41) protein is N5-carboxyaminoimidazole ribonucleotide synthase.